The sequence spans 517 residues: Amidophosphoribosyltransferase (517 aa).

Met-1 is modified (N-acetylmethionine). The propeptide occupies 1 to 11 (MELEESGIREE). The active-site Nucleophile is Cys-12. Residues 12–261 (CGVFGCIASG…PGEIVEISRH (250 aa)) form the Glutamine amidotransferase type-2 domain. Cys-280 provides a ligand contact to [4Fe-4S] cluster. Residues Ser-327, Asp-389, and Asp-390 each contribute to the Mg(2+) site. Positions 426, 503, and 506 each coordinate [4Fe-4S] cluster.

The protein in the C-terminal section; belongs to the purine/pyrimidine phosphoribosyltransferase family. As to quaternary structure, homotetramer. Mg(2+) is required as a cofactor. The cofactor is [4Fe-4S] cluster. In terms of tissue distribution, expressed at a high level in brain, heart, liver and stomach.

It catalyses the reaction 5-phospho-beta-D-ribosylamine + L-glutamate + diphosphate = 5-phospho-alpha-D-ribose 1-diphosphate + L-glutamine + H2O. It functions in the pathway purine metabolism; IMP biosynthesis via de novo pathway; N(1)-(5-phospho-D-ribosyl)glycinamide from 5-phospho-alpha-D-ribose 1-diphosphate: step 1/2. Activated by the substrate 5-phospho-alpha-D-ribosyl-1-pyrophosphate and inhibited by the purine ribonucleotides, the end products of purine biosynthesis. In terms of biological role, catalyzes the formation of phosphoribosylamine from phosphoribosylpyrophosphate (PRPP) and glutamine. The polypeptide is Amidophosphoribosyltransferase (Ppat) (Rattus norvegicus (Rat)).